Here is a 106-residue protein sequence, read N- to C-terminus: uncharacterized protein (106 aa).

The next 2 membrane-spanning stretches (helical) occupy residues Val10–Val30 and Leu65–Tyr85.

It is found in the membrane. This is an uncharacterized protein from Saccharomyces cerevisiae (strain ATCC 204508 / S288c) (Baker's yeast).